The following is a 150-amino-acid chain: MVLCFPLLLLLLVLWGPVCPLHAWPKRLTKAHWFEIQHIQPSPLQCNRAMSGINNYTQHCKHQNTFLHDSFQNVAAVCDLLSIVCKNRRHNCHQSSKPVNMTDCRLISGKYPQCRYSAAAQYKFFIVACDPPQKSDPRYKLVPVHLDSIL.

The signal sequence occupies residues 1–23 (MVLCFPLLLLLLVLWGPVCPLHA). His-38 acts as the Proton acceptor in catalysis. 4 disulfides stabilise this stretch: Cys-46–Cys-104, Cys-60–Cys-114, Cys-78–Cys-129, and Cys-85–Cys-92. N-linked (GlcNAc...) asparagine glycosylation occurs at Asn-55. Substrate-binding positions include 61 to 65 (KHQNT) and Lys-86. A glycan (N-linked (GlcNAc...) asparagine) is linked at Asn-100. Residue Arg-105 participates in substrate binding. The active-site Proton donor is the His-145.

This sequence belongs to the pancreatic ribonuclease family. In terms of assembly, interacts (via N-terminus) with bacterial lipopolysaccharide (LPS).

Its subcellular location is the secreted. The protein localises to the lysosome. It is found in the cytoplasmic granule. Its function is as follows. Ribonuclease which shows a preference for the pyrimidines uridine and cytosine. Has potent antibacterial activity against a range of Gram-positive and Gram-negative bacteria, including P.aeruginosa, A.baumanii, M.luteus, S.aureus, E.faecalis, E.faecium, S.saprophyticus and E.coli. Causes loss of bacterial membrane integrity, and also promotes agglutination of Gram-negative bacteria. Probably contributes to urinary tract sterility. Bactericidal activity is independent of RNase activity. This Pongo pygmaeus (Bornean orangutan) protein is Ribonuclease K6 (RNASE6).